Consider the following 79-residue polypeptide: UPF0291 protein lp_2062 (79 aa).

This sequence belongs to the UPF0291 family.

The protein resides in the cytoplasm. The chain is UPF0291 protein lp_2062 from Lactiplantibacillus plantarum (strain ATCC BAA-793 / NCIMB 8826 / WCFS1) (Lactobacillus plantarum).